The primary structure comprises 378 residues: Succinyl-diaminopimelate desuccinylase (378 aa).

Residue H66 participates in Zn(2+) binding. The active site involves D68. A Zn(2+)-binding site is contributed by D99. The active-site Proton acceptor is the E133. Zn(2+)-binding residues include E134, E162, and H348.

The protein belongs to the peptidase M20A family. DapE subfamily. In terms of assembly, homodimer. It depends on Zn(2+) as a cofactor. The cofactor is Co(2+).

The catalysed reaction is N-succinyl-(2S,6S)-2,6-diaminopimelate + H2O = (2S,6S)-2,6-diaminopimelate + succinate. It functions in the pathway amino-acid biosynthesis; L-lysine biosynthesis via DAP pathway; LL-2,6-diaminopimelate from (S)-tetrahydrodipicolinate (succinylase route): step 3/3. Functionally, catalyzes the hydrolysis of N-succinyl-L,L-diaminopimelic acid (SDAP), forming succinate and LL-2,6-diaminopimelate (DAP), an intermediate involved in the bacterial biosynthesis of lysine and meso-diaminopimelic acid, an essential component of bacterial cell walls. This chain is Succinyl-diaminopimelate desuccinylase, found in Halorhodospira halophila (strain DSM 244 / SL1) (Ectothiorhodospira halophila (strain DSM 244 / SL1)).